The chain runs to 813 residues: Leucine--tRNA ligase (813 aa).

The 'HIGH' region signature appears at 39–49 (PYPSGRIHMGH). The 'KMSKS' region signature appears at 582 to 586 (KMSKS). Residue Lys-585 coordinates ATP.

It belongs to the class-I aminoacyl-tRNA synthetase family.

It is found in the cytoplasm. It catalyses the reaction tRNA(Leu) + L-leucine + ATP = L-leucyl-tRNA(Leu) + AMP + diphosphate. The polypeptide is Leucine--tRNA ligase (Campylobacter hominis (strain ATCC BAA-381 / DSM 21671 / CCUG 45161 / LMG 19568 / NCTC 13146 / CH001A)).